A 301-amino-acid polypeptide reads, in one-letter code: Protoheme IX farnesyltransferase (301 aa).

The next 9 membrane-spanning stretches (helical) occupy residues 9–29, 42–62, 89–109, 113–133, 142–162, 168–188, 211–231, 232–252, and 280–300; these read VLAY…VATI, IALI…ANSL, TSHA…WLWW, LLAG…YTMV, VVWG…AVTG, PIVL…ALAM, VTKQ…TLVP, AAGV…LLMA, and VVFV…GSLL.

It belongs to the UbiA prenyltransferase family. Protoheme IX farnesyltransferase subfamily.

It is found in the cell membrane. It catalyses the reaction heme b + (2E,6E)-farnesyl diphosphate + H2O = Fe(II)-heme o + diphosphate. Its pathway is porphyrin-containing compound metabolism; heme O biosynthesis; heme O from protoheme: step 1/1. Converts heme B (protoheme IX) to heme O by substitution of the vinyl group on carbon 2 of heme B porphyrin ring with a hydroxyethyl farnesyl side group. In Rhodococcus jostii (strain RHA1), this protein is Protoheme IX farnesyltransferase.